Reading from the N-terminus, the 298-residue chain is Succinate dehydrogenase [ubiquinone] iron-sulfur subunit, mitochondrial (298 aa).

One can recognise a 2Fe-2S ferredoxin-type domain in the interval Tyr-59–Met-147. [2Fe-2S] cluster contacts are provided by Cys-107, Cys-112, Cys-115, and Cys-127. The region spanning Glu-190–Tyr-220 is the 4Fe-4S ferredoxin-type domain. Cys-200, Cys-203, and Cys-206 together coordinate [4Fe-4S] cluster. Cys-210 contributes to the [3Fe-4S] cluster binding site. Residue Trp-215 coordinates a ubiquinone. [3Fe-4S] cluster is bound by residues Cys-257 and Cys-263. Cys-267 serves as a coordination point for [4Fe-4S] cluster.

This sequence belongs to the succinate dehydrogenase/fumarate reductase iron-sulfur protein family. As to quaternary structure, component of complex II composed of four subunits: a flavoprotein (FP), an iron-sulfur protein (IP), and a cytochrome b composed of a large and a small subunit. It depends on [2Fe-2S] cluster as a cofactor. The cofactor is [3Fe-4S] cluster. Requires [4Fe-4S] cluster as cofactor.

It localises to the mitochondrion inner membrane. It carries out the reaction a quinone + succinate = fumarate + a quinol. It functions in the pathway carbohydrate metabolism; tricarboxylic acid cycle; fumarate from succinate (eukaryal route): step 1/1. In terms of biological role, iron-sulfur protein (IP) subunit of succinate dehydrogenase (SDH) that is involved in complex II of the mitochondrial electron transport chain and is responsible for transferring electrons from succinate to ubiquinone (coenzyme Q). The protein is Succinate dehydrogenase [ubiquinone] iron-sulfur subunit, mitochondrial (sdhb-1) of Caenorhabditis elegans.